The following is a 466-amino-acid chain: Myocardial zonula adherens protein (466 aa).

A compositionally biased stretch (polar residues) spans 1–10; the sequence is MLRSTSTVTL. Residues 1 to 20 form the signal peptide; that stretch reads MLRSTSTVTLLSGGAARTPG. Positions 1–23 are disordered; it reads MLRSTSTVTLLSGGAARTPGAPS. Coiled coils occupy residues 96–142 and 174–418; these read QLKE…SHAQ and LQKT…TQAK. The Required for DYNLL1-binding motif lies at 424 to 425; the sequence is RE.

Belongs to the MYZAP family. As to quaternary structure, interacts with DSP, MPRIP and TJP1/ZO1. Interaction with MPRIP inhibits the activation of transcription factor SRF. Interacts with GRIN1. Interacts with DYNLL1. As to expression, detected in heart, liver, skeletal muscle, placenta, small intestine, lung, prostate and testis. Expressed in arrector pili muscle (at protein level).

It localises to the cytoplasm. It is found in the cytoskeleton. Its subcellular location is the cell membrane. The protein resides in the myofibril. The protein localises to the sarcomere. It localises to the i band. It is found in the z line. Its subcellular location is the cell junction. Its function is as follows. Plays a role in cellular signaling via Rho-related GTP-binding proteins and subsequent activation of transcription factor SRF. Targets TJP1 to cell junctions. In cortical neurons, may play a role in glutaminergic signal transduction through interaction with the NMDA receptor subunit GRIN1. This Homo sapiens (Human) protein is Myocardial zonula adherens protein (MYZAP).